The chain runs to 552 residues: Metal transporter Nramp6.1 (552 aa).

A glycan (N-linked (GlcNAc...) asparagine) is linked at asparagine 11. Transmembrane regions (helical) follow at residues 55–75 (FLSYVGPGFLVSLAYLDPGNL), 88–108 (ELLWVVLVGLIFALTIQSLAA), 133–155 (CLWLLAEIAVMAADIPEVIGTAF), 159–181 (ILFNIPVWFGVLCTGCSTLLLLG), 189–209 (KLELLIAVLVFVMAACFFGEM), 238–258 (IALLGALVMPHNLFLHSALVL), and 275–295 (YFLIESGLALFVAFLINLAVI). N-linked (GlcNAc...) asparagine glycosylation is present at asparagine 306. Transmembrane regions (helical) follow at residues 338–358 (IYAIAVLASGQSSTITGTYAG), 377–397 (LVTRCIAITPSLIVSIIGGSS), 402–422 (LIIIASMILSFELPFALIPLL), 438–458 (IYIIVLSWILGLGIIGINIYY), and 478–498 (VFIGIIVFPLMAIYILAVIYL). A disordered region spans residues 511 to 552 (PNKNDPQQQTNMENGLAKSTEGPEMVDRAPYREDLADIPLPE). Positions 514–523 (NDPQQQTNME) are enriched in polar residues. A compositionally biased stretch (basic and acidic residues) spans 535-545 (MVDRAPYREDL).

The protein belongs to the NRAMP (TC 2.A.55) family.

Its subcellular location is the membrane. Its function is as follows. Probable divalent metal transporter. The chain is Metal transporter Nramp6.1 from Populus trichocarpa (Western balsam poplar).